The following is a 322-amino-acid chain: Serine/threonine-protein phosphatase PP1-2 (322 aa).

The Mn(2+) site is built by Asp60, His62, Asp88, and Asn120. His121 functions as the Proton donor in the catalytic mechanism. 2 residues coordinate Mn(2+): His169 and His244. The tract at residues 298-322 (RQRVSQSSIKESKSATNSLKKSKNN) is disordered. Polar residues predominate over residues 301-316 (VSQSSIKESKSATNSL).

Belongs to the PPP phosphatase family. PP-1 subfamily. It depends on Mn(2+) as a cofactor.

The catalysed reaction is O-phospho-L-seryl-[protein] + H2O = L-seryl-[protein] + phosphate. It carries out the reaction O-phospho-L-threonyl-[protein] + H2O = L-threonyl-[protein] + phosphate. In terms of biological role, essential role in cell cycle control. PP1 is perhaps required for exit from mitosis. The polypeptide is Serine/threonine-protein phosphatase PP1-2 (sds21) (Schizosaccharomyces pombe (strain 972 / ATCC 24843) (Fission yeast)).